Consider the following 430-residue polypeptide: Adenylosuccinate synthetase (430 aa).

GTP-binding positions include glycine 13 to lysine 19 and glycine 41 to threonine 43. Aspartate 14 functions as the Proton acceptor in the catalytic mechanism. Residues aspartate 14 and glycine 41 each coordinate Mg(2+). Residues aspartate 14–lysine 17, asparagine 39–histidine 42, threonine 130, arginine 144, glutamine 225, threonine 240, and arginine 304 each bind IMP. The Proton donor role is filled by histidine 42. Residue serine 300 to arginine 306 participates in substrate binding. Residues arginine 306, lysine 332–aspartate 334, and serine 414–glycine 416 each bind GTP.

Belongs to the adenylosuccinate synthetase family. In terms of assembly, homodimer. Mg(2+) is required as a cofactor.

It is found in the cytoplasm. The enzyme catalyses IMP + L-aspartate + GTP = N(6)-(1,2-dicarboxyethyl)-AMP + GDP + phosphate + 2 H(+). It functions in the pathway purine metabolism; AMP biosynthesis via de novo pathway; AMP from IMP: step 1/2. Its function is as follows. Plays an important role in the de novo pathway of purine nucleotide biosynthesis. Catalyzes the first committed step in the biosynthesis of AMP from IMP. In Thioalkalivibrio sulfidiphilus (strain HL-EbGR7), this protein is Adenylosuccinate synthetase.